The sequence spans 376 residues: Proton extrusion protein PxcA (376 aa).

A run of 4 helical transmembrane segments spans residues 150 to 170 (TLIS…VQQM), 251 to 271 (AVKN…VCII), 299 to 319 (IILF…QVLL), and 334 to 354 (FILL…KYWI).

The protein belongs to the CemA family.

Its subcellular location is the cell inner membrane. Required for H(+) efflux immediately after light irradiation to form a rapid H(+) concentration gradient across the thylakoid membranes. Together with PxcL, contributes to transient H(+) uptake following dark to light transition. The polypeptide is Proton extrusion protein PxcA (Prochlorococcus marinus (strain MIT 9303)).